The primary structure comprises 71 residues: Translation initiation factor IF-1 (71 aa).

An S1-like domain is found at 1-71; the sequence is MAKQSAIEQD…LSKARITYRY (71 aa).

This sequence belongs to the IF-1 family. As to quaternary structure, component of the 30S ribosomal translation pre-initiation complex which assembles on the 30S ribosome in the order IF-2 and IF-3, IF-1 and N-formylmethionyl-tRNA(fMet); mRNA recruitment can occur at any time during PIC assembly.

Its subcellular location is the cytoplasm. One of the essential components for the initiation of protein synthesis. Stabilizes the binding of IF-2 and IF-3 on the 30S subunit to which N-formylmethionyl-tRNA(fMet) subsequently binds. Helps modulate mRNA selection, yielding the 30S pre-initiation complex (PIC). Upon addition of the 50S ribosomal subunit IF-1, IF-2 and IF-3 are released leaving the mature 70S translation initiation complex. The polypeptide is Translation initiation factor IF-1 (Flavobacterium psychrophilum (strain ATCC 49511 / DSM 21280 / CIP 103535 / JIP02/86)).